Reading from the N-terminus, the 338-residue chain is Fructose-1,6-bisphosphatase class 1 1 (338 aa).

The Mg(2+) site is built by glutamate 88, aspartate 107, leucine 109, and aspartate 110. Substrate-binding positions include 110–113 (DGSS) and asparagine 196. Mg(2+) is bound at residue glutamate 268.

Belongs to the FBPase class 1 family. As to quaternary structure, homotetramer. Requires Mg(2+) as cofactor.

The protein localises to the cytoplasm. The enzyme catalyses beta-D-fructose 1,6-bisphosphate + H2O = beta-D-fructose 6-phosphate + phosphate. It participates in carbohydrate biosynthesis; Calvin cycle. The sequence is that of Fructose-1,6-bisphosphatase class 1 1 from Bradyrhizobium sp. (strain BTAi1 / ATCC BAA-1182).